The primary structure comprises 253 residues: Ribulose bisphosphate carboxylase large chain (253 aa).

Residues asparagine 35 and threonine 85 each contribute to the substrate site. The active-site Proton acceptor is the lysine 87. Position 89 (lysine 89) interacts with substrate. Residues lysine 113, aspartate 115, and glutamate 116 each coordinate Mg(2+). Lysine 113 is subject to N6-carboxylysine. The active-site Proton acceptor is the histidine 206. Substrate-binding residues include arginine 207 and histidine 239.

It belongs to the RuBisCO large chain family. Type I subfamily. In terms of assembly, heterohexadecamer of 8 large chains and 8 small chains; disulfide-linked. The disulfide link is formed within the large subunit homodimers. The cofactor is Mg(2+). In terms of processing, the disulfide bond which can form in the large chain dimeric partners within the hexadecamer appears to be associated with oxidative stress and protein turnover.

The protein localises to the plastid. It is found in the chloroplast. The enzyme catalyses 2 (2R)-3-phosphoglycerate + 2 H(+) = D-ribulose 1,5-bisphosphate + CO2 + H2O. It carries out the reaction D-ribulose 1,5-bisphosphate + O2 = 2-phosphoglycolate + (2R)-3-phosphoglycerate + 2 H(+). RuBisCO catalyzes two reactions: the carboxylation of D-ribulose 1,5-bisphosphate, the primary event in carbon dioxide fixation, as well as the oxidative fragmentation of the pentose substrate in the photorespiration process. Both reactions occur simultaneously and in competition at the same active site. The chain is Ribulose bisphosphate carboxylase large chain (rbcL) from Magnolia latahensis (Apocynophyllum latahense).